The following is a 152-amino-acid chain: UPF0266 membrane protein YobD (152 aa).

Transmembrane regions (helical) follow at residues leucine 6–methionine 26, isoleucine 45–histidine 65, and alanine 67–isoleucine 87.

This sequence belongs to the UPF0266 family.

Its subcellular location is the cell inner membrane. The sequence is that of UPF0266 membrane protein YobD from Escherichia fergusonii (strain ATCC 35469 / DSM 13698 / CCUG 18766 / IAM 14443 / JCM 21226 / LMG 7866 / NBRC 102419 / NCTC 12128 / CDC 0568-73).